The chain runs to 428 residues: Glucose-1-phosphate adenylyltransferase (428 aa).

Residues Tyr114, Gly179, 194–195 (EK), and Ser212 each bind alpha-D-glucose 1-phosphate.

It belongs to the bacterial/plant glucose-1-phosphate adenylyltransferase family. As to quaternary structure, homotetramer.

The catalysed reaction is alpha-D-glucose 1-phosphate + ATP + H(+) = ADP-alpha-D-glucose + diphosphate. Its pathway is glycan biosynthesis; glycogen biosynthesis. Its function is as follows. Involved in the biosynthesis of ADP-glucose, a building block required for the elongation reactions to produce glycogen. Catalyzes the reaction between ATP and alpha-D-glucose 1-phosphate (G1P) to produce pyrophosphate and ADP-Glc. In Yersinia pseudotuberculosis serotype IB (strain PB1/+), this protein is Glucose-1-phosphate adenylyltransferase.